A 135-amino-acid chain; its full sequence is S-protein homolog 20 (135 aa).

A signal peptide spans Met-1–Ala-26. Residue Asn-88 is glycosylated (N-linked (GlcNAc...) asparagine).

Belongs to the plant self-incompatibility (S1) protein family.

It localises to the secreted. The sequence is that of S-protein homolog 20 from Arabidopsis thaliana (Mouse-ear cress).